A 228-amino-acid polypeptide reads, in one-letter code: Ureidoacrylate amidohydrolase RutB (228 aa).

Asp-23 serves as the catalytic Proton acceptor. The active site involves Lys-132. The Nucleophile role is filled by Cys-165.

It belongs to the isochorismatase family. RutB subfamily.

The enzyme catalyses (Z)-3-ureidoacrylate + H2O + H(+) = (Z)-3-aminoacrylate + NH4(+) + CO2. It carries out the reaction (Z)-3-ureidoacrylate + H2O = (Z)-3-aminoacrylate + carbamate + H(+). It catalyses the reaction (Z)-2-methylureidoacrylate + H2O + H(+) = (Z)-2-methylaminoacrylate + NH4(+) + CO2. Hydrolyzes ureidoacrylate to form aminoacrylate and carbamate. The carbamate hydrolyzes spontaneously, thereby releasing one of the nitrogen atoms of the pyrimidine ring as ammonia and one of its carbon atoms as CO2. The protein is Ureidoacrylate amidohydrolase RutB of Agrobacterium fabrum (strain C58 / ATCC 33970) (Agrobacterium tumefaciens (strain C58)).